The primary structure comprises 425 residues: Sensor histidine kinase NarS (425 aa).

Helical transmembrane passes span 42 to 62, 71 to 91, 107 to 127, 130 to 150, 155 to 175, and 181 to 201; these read IASVLRIGVVGLMVAAMVVGT, IVLIGVYAVAALWALLLAYSA, LEPFAFTAVDVLILTGFQLLS, GIYPLLIMILLPVLVGLDVST, VVLACTLVGFAVAVLGDPVML, and PETIFRFALYAFLCATALMVV. One can recognise a Histidine kinase domain in the interval 224–425; the sequence is QTMTASEVLQ…HVCVELPLKR (202 aa). His-241 carries the phosphohistidine; by autocatalysis modification.

In terms of processing, autophosphorylated on His-241.

The protein resides in the cell membrane. It carries out the reaction ATP + protein L-histidine = ADP + protein N-phospho-L-histidine.. In terms of biological role, member of the two-component regulatory system NarS/NarL involved in gene expression during aerobic nitrate metabolism. Plays therefore a crucial role in anaerobic survival of mycobacteria in host. Functions as a sensor protein kinase which is autophosphorylated at a histidine residue and transfers its phosphate group to the conserved aspartic acid residue in the regulatory domain of NarL. In turn, NarL binds to the upstream promoter regions of target genes to regulate their expression during aerobic nitrate metabolism. The sequence is that of Sensor histidine kinase NarS from Mycobacterium tuberculosis (strain ATCC 25618 / H37Rv).